We begin with the raw amino-acid sequence, 349 residues long: UDP-N-acetylenolpyruvoylglucosamine reductase (349 aa).

The FAD-binding PCMH-type domain occupies 24-197 (FGIDATARFA…VAVTFRLPKR (174 aa)). Arginine 173 is an active-site residue. Residue serine 249 is the Proton donor of the active site. Glutamate 345 is a catalytic residue.

Belongs to the MurB family. Requires FAD as cofactor.

The protein localises to the cytoplasm. It catalyses the reaction UDP-N-acetyl-alpha-D-muramate + NADP(+) = UDP-N-acetyl-3-O-(1-carboxyvinyl)-alpha-D-glucosamine + NADPH + H(+). It functions in the pathway cell wall biogenesis; peptidoglycan biosynthesis. Functionally, cell wall formation. This chain is UDP-N-acetylenolpyruvoylglucosamine reductase, found in Burkholderia ambifaria (strain MC40-6).